A 186-amino-acid chain; its full sequence is NADH dehydrogenase [ubiquinone] 1 beta subcomplex subunit 8, mitochondrial (186 aa).

The N-terminal 28 residues, 1–28, are a transit peptide targeting the mitochondrion; it reads MAAARAGVLGVRWLQKAARNVVPLGART. Residues 133–153 traverse the membrane as a helical segment; that stretch reads LFGFVAFMLFMFWVGETYPAY.

Belongs to the complex I NDUFB8 subunit family. Complex I is composed of 45 different subunits.

The protein localises to the mitochondrion inner membrane. Its function is as follows. Accessory subunit of the mitochondrial membrane respiratory chain NADH dehydrogenase (Complex I), that is believed not to be involved in catalysis. Complex I functions in the transfer of electrons from NADH to the respiratory chain. The immediate electron acceptor for the enzyme is believed to be ubiquinone. In Bos taurus (Bovine), this protein is NADH dehydrogenase [ubiquinone] 1 beta subcomplex subunit 8, mitochondrial (NDUFB8).